Reading from the N-terminus, the 386-residue chain is Ribonuclease D (386 aa).

Residues 3–174 (HTITTTDELA…EIYEYLSAEL (172 aa)) enclose the 3'-5' exonuclease domain. The HRDC domain maps to 213–294 (SGRVVAIAQQ…ARGMSVPNSE (82 aa)).

It belongs to the RNase D family. The cofactor is a divalent metal cation.

The protein resides in the cytoplasm. It catalyses the reaction Exonucleolytic cleavage that removes extra residues from the 3'-terminus of tRNA to produce 5'-mononucleotides.. Its function is as follows. Exonuclease involved in the 3' processing of various precursor tRNAs. Initiates hydrolysis at the 3'-terminus of an RNA molecule and releases 5'-mononucleotides. This chain is Ribonuclease D, found in Jannaschia sp. (strain CCS1).